The chain runs to 529 residues: Berberine bridge enzyme-like 7 (529 aa).

The first 19 residues, 1–19 (MKEALSILCLALLVSVSEA), serve as a signal peptide directing secretion. A disulfide bond links C32 and C95. N52 carries an N-linked (GlcNAc...) asparagine glycan. In terms of domain architecture, FAD-binding PCMH-type spans 69–247 (YSSPNFKKLL…LSWKINLVKV (179 aa)). The segment at residues 110–172 (HDLEGLSYRS…QTLAFPAGVC (63 aa)) is a cross-link (6-(S-cysteinyl)-8alpha-(pros-histidyl)-FAD (His-Cys)). Residues N257, N341, and N439 are each glycosylated (N-linked (GlcNAc...) asparagine).

This sequence belongs to the oxygen-dependent FAD-linked oxidoreductase family. FAD serves as cofactor. Post-translationally, the FAD cofactor is bound via a bicovalent 6-S-cysteinyl, 8alpha-N1-histidyl FAD linkage.

The protein localises to the secreted. It is found in the cell wall. Probable flavin-dependent oxidoreductase. The polypeptide is Berberine bridge enzyme-like 7 (Arabidopsis thaliana (Mouse-ear cress)).